Here is a 582-residue protein sequence, read N- to C-terminus: MSKDLYKEDILYKKRHSIAHVMAEAVCDLFPNTKIAIGPPIKDGFYYDFEFKNPITEDSLLDIENRMREILKTGSSFEKEIISLEQALEIFKDEPYKIDLIKNFDLQNEISIYKSHNFIDLCRGPHVDNMNKIDPKAFKLTGIAGAYWRGNEKNTMLTRIYGTLWNNEKELRSYLNLREEIKKRDHRKLGKELDLFSIHEEIGPGLIFFHPNGAKIRALIEDFWREEHSKNGYDILFTPHVGKSWLWQTSGHLNFYKDSMFEKIEMDKSDYYLKPMNCPFHIAIYNTGKHSYRDLPFRWAELGTVYRYEKIGALHGMMRARGFTQDDAHIICTHSQVVDEIKEVLRFAIYMWSKFGFNSLKAYLSTKPDKSVGNNSDWEMSLKVLKEALSDFEVPYEIDKGGGAFYGPKIDLKIVDSLEREWQMSTIQFDFNLPERFNMTYTSEDGKEKRPFMIHRALLGSIERFFGILVEHYGGAFPLWLSHVQAVIIPVNNIVEDYTIKVFNKFKNAGIRIKLDNSSSRMNAKIREYQAKKIPYMFIIGEREAIEERISIRTRTNEQINGIELDEALKLILLKVRDKEIS.

The segment at 185–478 (DHRKLGKELD…LVEHYGGAFP (294 aa)) is catalytic. Cys-278, His-329, and His-455 together coordinate Zn(2+).

Belongs to the class-II aminoacyl-tRNA synthetase family. Homodimer. Requires Zn(2+) as cofactor.

The protein resides in the cytoplasm. It carries out the reaction tRNA(Thr) + L-threonine + ATP = L-threonyl-tRNA(Thr) + AMP + diphosphate + H(+). Catalyzes the attachment of threonine to tRNA(Thr) in a two-step reaction: L-threonine is first activated by ATP to form Thr-AMP and then transferred to the acceptor end of tRNA(Thr). Also edits incorrectly charged L-seryl-tRNA(Thr). The polypeptide is Threonine--tRNA ligase (Borrelia garinii subsp. bavariensis (strain ATCC BAA-2496 / DSM 23469 / PBi) (Borreliella bavariensis)).